The primary structure comprises 603 residues: Pyruvate decarboxylase 4 (603 aa).

2 residues coordinate substrate: Asp-65 and His-152. The tract at residues 430–512 (DSWFNCQKLK…FLINNGGYTI (83 aa)) is thiamine pyrophosphate binding. Mg(2+)-binding residues include Asp-480, Asn-507, and Gly-509. Glu-513 lines the substrate pocket.

The protein belongs to the TPP enzyme family. In terms of assembly, homotetramer. The cofactor is a metal cation. Thiamine diphosphate is required as a cofactor. In terms of tissue distribution, expressed in shoots and at lowe levels in roots, flowers and siliques.

It catalyses the reaction a 2-oxocarboxylate + H(+) = an aldehyde + CO2. This is Pyruvate decarboxylase 4 (PDC4) from Arabidopsis thaliana (Mouse-ear cress).